The chain runs to 152 residues: Endoribonuclease YbeY (152 aa).

Residues H113, H117, and H123 each contribute to the Zn(2+) site.

Belongs to the endoribonuclease YbeY family. Requires Zn(2+) as cofactor.

It localises to the cytoplasm. Single strand-specific metallo-endoribonuclease involved in late-stage 70S ribosome quality control and in maturation of the 3' terminus of the 16S rRNA. This is Endoribonuclease YbeY from Pseudoalteromonas atlantica (strain T6c / ATCC BAA-1087).